Consider the following 294-residue polypeptide: Nucleotide-binding protein DICTH_1001 (294 aa).

An ATP-binding site is contributed by 10-17 (GLSGAGKS). 61 to 64 (DIRT) lines the GTP pocket.

The protein belongs to the RapZ-like family.

Functionally, displays ATPase and GTPase activities. The polypeptide is Nucleotide-binding protein DICTH_1001 (Dictyoglomus thermophilum (strain ATCC 35947 / DSM 3960 / H-6-12)).